Reading from the N-terminus, the 182-residue chain is Dual-action ribosomal maturation protein DarP (182 aa).

It belongs to the DarP family.

The protein resides in the cytoplasm. Functionally, member of a network of 50S ribosomal subunit biogenesis factors which assembles along the 30S-50S interface, preventing incorrect 23S rRNA structures from forming. Promotes peptidyl transferase center (PTC) maturation. The sequence is that of Dual-action ribosomal maturation protein DarP from Yersinia pseudotuberculosis serotype O:1b (strain IP 31758).